A 240-amino-acid polypeptide reads, in one-letter code: Ribonuclease PH (240 aa).

Residues Arg86 and 124–126 each bind phosphate; that span reads GTR.

The protein belongs to the RNase PH family. In terms of assembly, homohexameric ring arranged as a trimer of dimers.

The catalysed reaction is tRNA(n+1) + phosphate = tRNA(n) + a ribonucleoside 5'-diphosphate. Functionally, phosphorolytic 3'-5' exoribonuclease that plays an important role in tRNA 3'-end maturation. Removes nucleotide residues following the 3'-CCA terminus of tRNAs; can also add nucleotides to the ends of RNA molecules by using nucleoside diphosphates as substrates, but this may not be physiologically important. Probably plays a role in initiation of 16S rRNA degradation (leading to ribosome degradation) during starvation. The polypeptide is Ribonuclease PH (Rickettsia prowazekii (strain Madrid E)).